Consider the following 240-residue polypeptide: Ditrans,polycis-undecaprenyl-diphosphate synthase ((2E,6E)-farnesyl-diphosphate specific) (240 aa).

Residue D18 is part of the active site. D18 contacts Mg(2+). Substrate-binding positions include 19-22, W23, R31, H35, and 63-65; these read GNGR and SSE. N66 serves as the catalytic Proton acceptor. Residues W67, R69, R186, and 192–194 each bind substrate; that span reads RIS. E205 is a Mg(2+) binding site.

This sequence belongs to the UPP synthase family. In terms of assembly, homodimer. Mg(2+) serves as cofactor.

The enzyme catalyses 8 isopentenyl diphosphate + (2E,6E)-farnesyl diphosphate = di-trans,octa-cis-undecaprenyl diphosphate + 8 diphosphate. In terms of biological role, catalyzes the sequential condensation of isopentenyl diphosphate (IPP) with (2E,6E)-farnesyl diphosphate (E,E-FPP) to yield (2Z,6Z,10Z,14Z,18Z,22Z,26Z,30Z,34E,38E)-undecaprenyl diphosphate (di-trans,octa-cis-UPP). UPP is the precursor of glycosyl carrier lipid in the biosynthesis of bacterial cell wall polysaccharide components such as peptidoglycan and lipopolysaccharide. This is Ditrans,polycis-undecaprenyl-diphosphate synthase ((2E,6E)-farnesyl-diphosphate specific) from Pasteurella multocida (strain Pm70).